The chain runs to 101 residues: Integration host factor subunit beta (101 aa).

Belongs to the bacterial histone-like protein family. As to quaternary structure, heterodimer of an alpha and a beta chain.

Its function is as follows. This protein is one of the two subunits of integration host factor, a specific DNA-binding protein that functions in genetic recombination as well as in transcriptional and translational control. The protein is Integration host factor subunit beta of Maricaulis maris (strain MCS10) (Caulobacter maris).